A 584-amino-acid chain; its full sequence is Optineurin (584 aa).

Residues 1–32 (MSHQPLSCLTEKGDSPCETPGNGPSNMVHPSL) are disordered. The stretch at 38–180 (EELLQQMKEL…VSELQLKLNS (143 aa)) forms a coiled coil. Residues 58–219 (MKLNNQAMKG…TPTRTDPISL (162 aa)) are interaction with Rab8. Residues 186 to 191 (DSFVEI) carry the LIR motif. Phosphoserine is present on serine 187. Coiled-coil stretches lie at residues 243–278 (CLREGNQKVERLEVALREAKERISDFEKKANGHSST) and 307–511 (IQVT…DIEE). Over residues 267-295 (DFEKKANGHSSTEKQTARRADREKEDKGQ) the composition is skewed to basic and acidic residues. Positions 267-302 (DFEKKANGHSSTEKQTARRADREKEDKGQESVGSEV) are disordered. Serine 345 is modified (phosphoserine). The interval 414–584 (TKQQAEKVDK…LQIHVMDCII (171 aa)) is interaction with HD. Residues 415 to 524 (KQQAEKVDKM…RQSLMEMQCR (110 aa)) are interaction with MYO6. The UBAN signature appears at 477-482 (DFHAER). Serine 530 carries the post-translational modification Phosphoserine. The CCHC NOA-type zinc finger occupies 554–584 (PRSIPIHSCPKCGEVLPDIDTLQIHVMDCII). Zn(2+)-binding residues include cysteine 562, cysteine 565, histidine 578, and cysteine 582.

Self-associates. Interacts with HD, GTF3A, TRAF3, TBK1 and MYO6. Interacts (via UBAN) with ubiquitinated TFRC. Interacts with active GTP-bound Rab8 (RAB8A and/or RAB8B). Interacts with TBC1D17. Binds to linear ubiquitin chains. Interacts with LC3 family members MAP1LC3A, MAP1LC3B, GABARAP, GABARAPL1 and GABARAPL2; OPTN phosphorylation increases the association (at least with MAP1LC3B). Interacts with RAB12; the interaction may be indirect. Interacts with TBK1; this interaction leads to the Golgi localization of TBK1 and its subsequent activation. Interacts with palmitoyltransferase ZDHHC17/HIP14; the interaction does not lead to palmitoylation of OPTN. Interacts with CYLD. Interacts with TOM1; the interaction is indirect and is mediated by MYO6, which acts as a bridge between TOM1 and OPTN. Interacts with USP12; the interaction is independent of USP12 deubiquitinase activity and may be involved in regulation of autophagic flux. Phosphorylated by TBK1, leading to restrict bacterial proliferation in case of infection. In terms of tissue distribution, in eye, it is expressed in anterior segment, retina, and optic nerve blood vessels (at protein level). Highly expressed in adult liver, heart and testis.

The protein resides in the cytoplasm. The protein localises to the perinuclear region. It localises to the golgi apparatus. Its subcellular location is the trans-Golgi network. It is found in the cytoplasmic vesicle. The protein resides in the autophagosome. The protein localises to the recycling endosome. Its function is as follows. Plays an important role in the maintenance of the Golgi complex, in membrane trafficking, in exocytosis, through its interaction with myosin VI and Rab8. Links myosin VI to the Golgi complex and plays an important role in Golgi ribbon formation. Plays a role in the activation of innate immune response during viral infection. Mechanistically, recruits TBK1 at the Golgi apparatus, promoting its trans-phosphorylation after RLR or TLR3 stimulation. In turn, activated TBK1 phosphorylates its downstream partner IRF3 to produce IFN-beta. Plays a neuroprotective role in the eye and optic nerve. May act by regulating membrane trafficking and cellular morphogenesis via a complex that contains Rab8 and huntingtin (HD). Mediates the interaction of Rab8 with the probable GTPase-activating protein TBC1D17 during Rab8-mediated endocytic trafficking, such as that of transferrin receptor (TFRC/TfR); regulates Rab8 recruitment to tubules emanating from the endocytic recycling compartment. Autophagy receptor that interacts directly with both the cargo to become degraded and an autophagy modifier of the MAP1 LC3 family; targets ubiquitin-coated bacteria (xenophagy), such as cytoplasmic Salmonella enterica, and appears to function in the same pathway as SQSTM1 and CALCOCO2/NDP52. The chain is Optineurin (Optn) from Mus musculus (Mouse).